The chain runs to 329 residues: NAC domain-containing protein 79 (329 aa).

In terms of domain architecture, NAC spans 17-167 (LPPGFRFHPT…EWVICRVFHK (151 aa)). The DNA-binding element occupies 114–173 (VGMKKTLVFYRGRAPKGQKTNWVMHEYRLDGKLSAHNLPKTAKNEWVICRVFHKTAGGKK).

In terms of tissue distribution, expressed at low levels in leaves.

Its subcellular location is the nucleus. This chain is NAC domain-containing protein 79, found in Arabidopsis thaliana (Mouse-ear cress).